The primary structure comprises 303 residues: Hemolysin E (303 aa).

Cysteine 87 and cysteine 285 form a disulfide bridge. A helical membrane pass occupies residues 179-199; sequence AGAAAGIVAGPFGLIISYSIA.

It belongs to the hemolysin E family. As to quaternary structure, monomer and oligomer. In periplasm, it is present as a monomer, while in outer membrane vesicles, it oligomerizes to form a pore structure that is active. The pore is formed by a dodecamer. In terms of processing, in periplasm, it forms a disulfide bond, which prevents the oligomerization. In outer membrane vesicles, the redox status prevents formation of the disulfide bond, leading to oligomerization and pore formation.

Its subcellular location is the secreted. It is found in the periplasm. It localises to the host cell membrane. Its function is as follows. Toxin, which has some hemolytic activity towards mammalian cells. Acts by forming a pore-like structure upon contact with mammalian cells. This is Hemolysin E (hlyE) from Salmonella paratyphi A (strain ATCC 9150 / SARB42).